The chain runs to 503 residues: Lycopene beta cyclase, chloroplastic/chromoplastic (503 aa).

Residues 1–85 constitute a chloroplast and chromoplast transit peptide; it reads MDTLLRTHNR…DLPLYDPSKA (85 aa). An NAD(+)-binding site is contributed by 90 to 117; it reads LAVVGGGPLARSCSTSLGGGLSVVSIDP.

It belongs to the lycopene cyclase family.

Its subcellular location is the plastid. It is found in the chloroplast. The protein resides in the chromoplast. It localises to the chromoplast membrane. The protein localises to the chloroplast membrane. It carries out the reaction a carotenoid psi-end group = a carotenoid beta-end derivative. The protein operates within carotenoid biosynthesis; beta-carotene biosynthesis. It functions in the pathway carotenoid biosynthesis; beta-zeacarotene biosynthesis. Catalyzes the double cyclization reaction which converts lycopene to beta-carotene and neurosporene to beta-zeacarotene. This is Lycopene beta cyclase, chloroplastic/chromoplastic (LCY1) from Narcissus pseudonarcissus (Daffodil).